Reading from the N-terminus, the 448-residue chain is N-succinylarginine dihydrolase (448 aa).

Substrate contacts are provided by residues glycine 19–serine 28, asparagine 110, and histidine 137–arginine 138. Glutamate 174 is a catalytic residue. Position 214 (arginine 214) interacts with substrate. Residue histidine 250 is part of the active site. Residues aspartate 252 and asparagine 365 each coordinate substrate. Cysteine 371 (nucleophile) is an active-site residue.

The protein belongs to the succinylarginine dihydrolase family. Homodimer.

It catalyses the reaction N(2)-succinyl-L-arginine + 2 H2O + 2 H(+) = N(2)-succinyl-L-ornithine + 2 NH4(+) + CO2. Its pathway is amino-acid degradation; L-arginine degradation via AST pathway; L-glutamate and succinate from L-arginine: step 2/5. Catalyzes the hydrolysis of N(2)-succinylarginine into N(2)-succinylornithine, ammonia and CO(2). The sequence is that of N-succinylarginine dihydrolase from Pseudomonas fluorescens (strain Pf0-1).